Consider the following 230-residue polypeptide: Uracil-DNA glycosylase (230 aa).

Aspartate 70 (proton acceptor) is an active-site residue.

Belongs to the uracil-DNA glycosylase (UDG) superfamily. UNG family.

It is found in the cytoplasm. The enzyme catalyses Hydrolyzes single-stranded DNA or mismatched double-stranded DNA and polynucleotides, releasing free uracil.. Its function is as follows. Excises uracil residues from the DNA which can arise as a result of misincorporation of dUMP residues by DNA polymerase or due to deamination of cytosine. The protein is Uracil-DNA glycosylase of Campylobacter concisus (strain 13826).